The sequence spans 155 residues: Ribosomal RNA large subunit methyltransferase H (155 aa).

Residues glycine 104 and 123–128 (FGNITL) each bind S-adenosyl-L-methionine.

The protein belongs to the RNA methyltransferase RlmH family. In terms of assembly, homodimer.

The protein localises to the cytoplasm. It carries out the reaction pseudouridine(1915) in 23S rRNA + S-adenosyl-L-methionine = N(3)-methylpseudouridine(1915) in 23S rRNA + S-adenosyl-L-homocysteine + H(+). Functionally, specifically methylates the pseudouridine at position 1915 (m3Psi1915) in 23S rRNA. This chain is Ribosomal RNA large subunit methyltransferase H, found in Mesoplasma florum (strain ATCC 33453 / NBRC 100688 / NCTC 11704 / L1) (Acholeplasma florum).